We begin with the raw amino-acid sequence, 2137 residues long: Pecanex-like protein 2 (2137 aa).

2 consecutive transmembrane segments (helical) span residues 34 to 54 (CHLY…LAFP) and 57 to 77 (AIIV…IKLV). 4 disordered regions span residues 92-163 (QQKP…LELS), 225-251 (NGKG…VDKG), 402-530 (EKTS…HARV), and 545-572 (SAEI…QMPN). Positions 96 to 114 (SRKEEKPNKDKEAKGEHIT) are enriched in basic and acidic residues. The span at 116 to 125 (HRNPSNNRQI) shows a compositional bias: polar residues. The N-linked (GlcNAc...) asparagine glycan is linked to N136. Over residues 146–156 (SRGQSITSHHS) the composition is skewed to polar residues. A glycan (N-linked (GlcNAc...) asparagine) is linked at N449. The segment covering 479-490 (IKDHSSSSREPW) has biased composition (basic and acidic residues). Over residues 510-520 (GQTNLDPSSCK) the composition is skewed to polar residues. 5 N-linked (GlcNAc...) asparagine glycosylation sites follow: N550, N572, N587, N598, and N613. The segment covering 593 to 602 (ASSQLNGSAE) has biased composition (polar residues). Residues 593–612 (ASSQLNGSAEQNEESGLLRD) are disordered. Disordered regions lie at residues 621-655 (EILE…CTQP) and 740-763 (AREM…SGDP). Residues 630-655 (GHSSKQGKPDLQSQDHTSTGPACTQP) are compositionally biased toward polar residues. Residues 746–760 (SSSSTTTSESQDPSS) are compositionally biased toward low complexity. The next 13 helical transmembrane spans lie at 844 to 864 (LAIL…SQGF), 868 to 888 (MWVL…LKSV), 901 to 921 (QIIT…ILLL), 952 to 972 (YLIV…FPQI), 983 to 1003 (IDML…VYSV), 1029 to 1049 (HIPA…YHLS), 1099 to 1119 (LIVC…TVFL), 1124 to 1144 (FLSI…HYVL), 1193 to 1213 (YILY…LISN), 1237 to 1257 (SFCN…FFHF), 1265 to 1285 (SFLL…DLLH), 1302 to 1322 (GSSF…MLFF), and 1324 to 1344 (TIAT…VIFI). Residues N1412, N1553, and N1818 are each glycosylated (N-linked (GlcNAc...) asparagine). Residues 1876-1958 (RQHSGGNIED…RPPMLSSSGP (83 aa)) form a disordered region. 3 stretches are compositionally biased toward polar residues: residues 1901 to 1910 (SGGSQESSAE), 1920 to 1929 (GVSSCEGTQR), and 1937 to 1958 (SQSV…SSGP). N2054 carries an N-linked (GlcNAc...) asparagine glycan.

It belongs to the pecanex family.

The protein resides in the membrane. In terms of biological role, may play a role in tumorigenesis of colorectal carcinomas with high microsatellite instability (MSI-H). The chain is Pecanex-like protein 2 from Homo sapiens (Human).